The sequence spans 232 residues: MSPVFLIMIPAGYLVGAIPMAYLLSRWRRGIDIRRYGSGNVGASNVIKTAGKKLGLAVFVFDVSKGAIIILLAGWLGLELWQQIVVGLLTIAGHNWPVFLRFNGGRGIATSLGVALVMAPVPALIALSTALTFGFFKKMAPGVFLGVGALPVMSGYFHGFFGVQEHQTVTWGFAGLFLIMIVRRLMAPDSEYSSTVSKAELVFNRMFLDRDIRSRSVWINRNTAAHKEGLGI.

6 helical membrane-spanning segments follow: residues 4–24 (VFLI…AYLL), 54–76 (LGLA…AGWL), 80–99 (LWQQ…WPVF), 107–127 (GIAT…LIAL), 143–163 (VFLG…FFGV), and 168–188 (TVTW…LMAP).

Belongs to the PlsY family. In terms of assembly, probably interacts with PlsX.

Its subcellular location is the cell membrane. It carries out the reaction an acyl phosphate + sn-glycerol 3-phosphate = a 1-acyl-sn-glycero-3-phosphate + phosphate. The protein operates within lipid metabolism; phospholipid metabolism. Catalyzes the transfer of an acyl group from acyl-phosphate (acyl-PO(4)) to glycerol-3-phosphate (G3P) to form lysophosphatidic acid (LPA). This enzyme utilizes acyl-phosphate as fatty acyl donor, but not acyl-CoA or acyl-ACP. This Dehalococcoides mccartyi (strain CBDB1) protein is Glycerol-3-phosphate acyltransferase 4.